The following is a 501-amino-acid chain: L-arabinose isomerase (501 aa).

Residues glutamate 306, glutamate 333, histidine 350, and histidine 450 each contribute to the Mn(2+) site.

The protein belongs to the arabinose isomerase family. In terms of assembly, homohexamer. Mn(2+) is required as a cofactor.

The enzyme catalyses beta-L-arabinopyranose = L-ribulose. It participates in carbohydrate degradation; L-arabinose degradation via L-ribulose; D-xylulose 5-phosphate from L-arabinose (bacterial route): step 1/3. Functionally, catalyzes the conversion of L-arabinose to L-ribulose. In Erwinia tasmaniensis (strain DSM 17950 / CFBP 7177 / CIP 109463 / NCPPB 4357 / Et1/99), this protein is L-arabinose isomerase.